A 142-amino-acid chain; its full sequence is Small ribosomal subunit protein uS12 (142 aa).

Belongs to the universal ribosomal protein uS12 family. Part of the 30S ribosomal subunit.

Its function is as follows. With S4 and S5 plays an important role in translational accuracy. Located at the interface of the 30S and 50S subunits. The chain is Small ribosomal subunit protein uS12 from Methanoculleus marisnigri (strain ATCC 35101 / DSM 1498 / JR1).